Here is a 369-residue protein sequence, read N- to C-terminus: Flagellar P-ring protein (369 aa).

Residues 1-23 (MIKQFAVSLLLVLLTLVTTTASA) form the signal peptide.

This sequence belongs to the FlgI family. As to quaternary structure, the basal body constitutes a major portion of the flagellar organelle and consists of four rings (L,P,S, and M) mounted on a central rod.

It localises to the periplasm. The protein localises to the bacterial flagellum basal body. Assembles around the rod to form the L-ring and probably protects the motor/basal body from shearing forces during rotation. In Photorhabdus laumondii subsp. laumondii (strain DSM 15139 / CIP 105565 / TT01) (Photorhabdus luminescens subsp. laumondii), this protein is Flagellar P-ring protein.